The following is a 218-amino-acid chain: Small ribosomal subunit protein uS3c (218 aa).

In terms of domain architecture, KH type-2 spans 47–118; that stretch reads VQNNIRISSG…KLNIAITRIS (72 aa).

Belongs to the universal ribosomal protein uS3 family. In terms of assembly, part of the 30S ribosomal subunit.

It is found in the plastid. The protein localises to the chloroplast. This is Small ribosomal subunit protein uS3c (rps3) from Draba nemorosa (Woodland whitlowgrass).